A 72-amino-acid chain; its full sequence is Exodeoxyribonuclease 7 small subunit (72 aa).

It belongs to the XseB family. Heterooligomer composed of large and small subunits.

The protein resides in the cytoplasm. The catalysed reaction is Exonucleolytic cleavage in either 5'- to 3'- or 3'- to 5'-direction to yield nucleoside 5'-phosphates.. In terms of biological role, bidirectionally degrades single-stranded DNA into large acid-insoluble oligonucleotides, which are then degraded further into small acid-soluble oligonucleotides. In Clostridium kluyveri (strain NBRC 12016), this protein is Exodeoxyribonuclease 7 small subunit.